The following is a 332-amino-acid chain: Probable electron transfer flavoprotein subunit alpha, mitochondrial (332 aa).

275 to 303 contributes to the FAD binding site; the sequence is LYIAIGISGAIQHLAGMKDSKVIVAINKD.

This sequence belongs to the ETF alpha-subunit/FixB family. As to quaternary structure, heterodimer of an alpha and a beta subunit. It depends on FAD as a cofactor.

The protein localises to the mitochondrion matrix. Its function is as follows. The electron transfer flavoprotein serves as a specific electron acceptor for several dehydrogenases, including five acyl-CoA dehydrogenases, glutaryl-CoA and sarcosine dehydrogenase. It transfers the electrons to the main mitochondrial respiratory chain via ETF-ubiquinone oxidoreductase (ETF dehydrogenase). This chain is Probable electron transfer flavoprotein subunit alpha, mitochondrial, found in Caenorhabditis elegans.